We begin with the raw amino-acid sequence, 240 residues long: tRNA pseudouridine synthase B (240 aa).

The active-site Nucleophile is Asp-54.

It belongs to the pseudouridine synthase TruB family. Type 1 subfamily.

The catalysed reaction is uridine(55) in tRNA = pseudouridine(55) in tRNA. In terms of biological role, responsible for synthesis of pseudouridine from uracil-55 in the psi GC loop of transfer RNAs. The polypeptide is tRNA pseudouridine synthase B (Chlorobium phaeovibrioides (strain DSM 265 / 1930) (Prosthecochloris vibrioformis (strain DSM 265))).